The chain runs to 170 residues: Small ribosomal subunit protein uS4 (170 aa).

The 65-residue stretch at 100–164 (RRLQTVVYRE…SDLTDELHPA (65 aa)) folds into the S4 RNA-binding domain.

This sequence belongs to the universal ribosomal protein uS4 family. As to quaternary structure, part of the 30S ribosomal subunit. Contacts protein S5. The interaction surface between S4 and S5 is involved in control of translational fidelity.

In terms of biological role, one of the primary rRNA binding proteins, it binds directly to 16S rRNA where it nucleates assembly of the body of the 30S subunit. With S5 and S12 plays an important role in translational accuracy. This Halobacterium salinarum (strain ATCC 29341 / DSM 671 / R1) protein is Small ribosomal subunit protein uS4.